The sequence spans 463 residues: Glutamyl-tRNA reductase (463 aa).

Substrate is bound by residues 49–52 (TCNR), Ser109, 114–116 (EQQ), and Gln120. Residue Cys50 is the Nucleophile of the active site. 196 to 201 (GAGAMS) contributes to the NADP(+) binding site.

This sequence belongs to the glutamyl-tRNA reductase family. In terms of assembly, homodimer.

The enzyme catalyses (S)-4-amino-5-oxopentanoate + tRNA(Glu) + NADP(+) = L-glutamyl-tRNA(Glu) + NADPH + H(+). Its pathway is porphyrin-containing compound metabolism; protoporphyrin-IX biosynthesis; 5-aminolevulinate from L-glutamyl-tRNA(Glu): step 1/2. Its function is as follows. Catalyzes the NADPH-dependent reduction of glutamyl-tRNA(Glu) to glutamate 1-semialdehyde (GSA). This chain is Glutamyl-tRNA reductase, found in Corynebacterium glutamicum (strain ATCC 13032 / DSM 20300 / JCM 1318 / BCRC 11384 / CCUG 27702 / LMG 3730 / NBRC 12168 / NCIMB 10025 / NRRL B-2784 / 534).